The primary structure comprises 990 residues: Tyrosine-protein phosphatase 3 (990 aa).

Disordered regions lie at residues 47 to 88 (QSQS…SPSV), 100 to 193 (NKIN…SNIE), 246 to 414 (PNQQ…SFSQ), and 431 to 452 (KPEM…HNDL). Composition is skewed to low complexity over residues 52 to 88 (NTNT…SPSV) and 100 to 117 (NKIN…NNNN). Residues 127–136 (LKLSNTMIIK) are compositionally biased toward polar residues. Composition is skewed to low complexity over residues 137-191 (NNNN…SNSN), 250-271 (SSSS…SSLL), 278-293 (NNST…NSSN), 310-327 (QAQV…QHQQ), and 334-413 (NLSS…TSFS). In terms of domain architecture, Tyrosine-protein phosphatase spans 422–715 (MRLEFEMIKK…IFIFKVINDV (294 aa)). Positions 437-447 (KKSHKHHQRHY) are enriched in basic residues. Cys-650 acts as the Phosphocysteine intermediate in catalysis. Positions 786–795 (PPQQQQDNPF) are enriched in polar residues. Disordered stretches follow at residues 786–814 (PPQQ…NISI) and 834–990 (LQQQ…IKCF). Composition is skewed to low complexity over residues 796–806 (SKSSIKISPSP) and 834–850 (LQQQ…DNPP). Residues 851–868 (LNMSSNSIKFPPVTSLSS) show a composition bias toward polar residues. Low complexity-rich tracts occupy residues 878 to 916 (NDNN…DNNG) and 924 to 968 (GSFL…SDNN).

This sequence belongs to the protein-tyrosine phosphatase family. Non-receptor class subfamily. In terms of tissue distribution, in the anterior-like and prestalk cell types.

It localises to the cytoplasm. It carries out the reaction O-phospho-L-tyrosyl-[protein] + H2O = L-tyrosyl-[protein] + phosphate. Functionally, seems to dephosphorylate a protein of 130 kDa (p130). This chain is Tyrosine-protein phosphatase 3 (ptpC), found in Dictyostelium discoideum (Social amoeba).